We begin with the raw amino-acid sequence, 208 residues long: MLKPLSQLVCALPLVVAASSYADDSAALKDKLAKLDNLKANFSQQVTDVNNKVIQQGTGTFALAVPNQFYWHLTQPDESLIVADGRDVWIYNPFAEEVSVLDFNQAINASPIALLVHRDDATWQAYQVKRQDDCYQITPKAVDASVTGVEVCFKDEQLEVMKLTDQQGNLSVFNLSAQAPLKDADASLFQFTVPEGVDIDDQRLKALD.

Residues 1-22 (MLKPLSQLVCALPLVVAASSYA) form the signal peptide.

It belongs to the LolA family. As to quaternary structure, monomer.

The protein localises to the periplasm. Participates in the translocation of lipoproteins from the inner membrane to the outer membrane. Only forms a complex with a lipoprotein if the residue after the N-terminal Cys is not an aspartate (The Asp acts as a targeting signal to indicate that the lipoprotein should stay in the inner membrane). In Shewanella loihica (strain ATCC BAA-1088 / PV-4), this protein is Outer-membrane lipoprotein carrier protein.